Consider the following 132-residue polypeptide: Phosphoribosyl-AMP cyclohydrolase (132 aa).

Position 86 (Asp86) interacts with Mg(2+). Position 87 (Cys87) interacts with Zn(2+). Asp88 and Asp90 together coordinate Mg(2+). The Zn(2+) site is built by Cys103 and Cys110.

It belongs to the PRA-CH family. In terms of assembly, homodimer. Requires Mg(2+) as cofactor. It depends on Zn(2+) as a cofactor.

It localises to the cytoplasm. It carries out the reaction 1-(5-phospho-beta-D-ribosyl)-5'-AMP + H2O = 1-(5-phospho-beta-D-ribosyl)-5-[(5-phospho-beta-D-ribosylamino)methylideneamino]imidazole-4-carboxamide. It participates in amino-acid biosynthesis; L-histidine biosynthesis; L-histidine from 5-phospho-alpha-D-ribose 1-diphosphate: step 3/9. Catalyzes the hydrolysis of the adenine ring of phosphoribosyl-AMP. In Clavibacter michiganensis subsp. michiganensis (strain NCPPB 382), this protein is Phosphoribosyl-AMP cyclohydrolase.